Reading from the N-terminus, the 380-residue chain is Oocyte-specific homeobox protein 4 (380 aa).

Disordered stretches follow at residues M1–V25, V43–R95, K152–S182, P234–P303, and T339–Y380. Polar residues predominate over residues V43–H53. Over residues S54–E67 the composition is skewed to basic and acidic residues. A DNA-binding region (homeobox) is located at residues C94–S153. The span at P234–S250 shows a compositional bias: basic and acidic residues. The segment covering S260–S271 has biased composition (low complexity). Composition is skewed to polar residues over residues L278–T302 and N351–Y380.

It belongs to the paired homeobox family. Obox subfamily. Specifically expressed in early embryos.

The protein localises to the nucleus. Transcription factor required for zygotic genome activation (ZGA), a critical event in early embryonic development during which the developmental control passes from maternally provided mRNAs to the expression of the zygotic genome after fertilization. Cannot compensate for loss of other members of the Obox family, suggesting that its function differs from other Obox family members. May regulate expression of histone genes in embryonic stem cells. Also involved in completion of meiosis of oocytes during the meiosis-I/meiosis-II transition. Required to maintain the nuclear membrane of the germinal vesicle in oocytes. The polypeptide is Oocyte-specific homeobox protein 4 (Mus musculus (Mouse)).